We begin with the raw amino-acid sequence, 92 residues long: Cell division protein FtsB (92 aa).

Residues 1-3 are Cytoplasmic-facing; the sequence is MRF. The helical transmembrane segment at 4-21 threads the bilayer; it reads FQVGLLCLALFVQYRLWF. The Periplasmic portion of the chain corresponds to 22–92; that stretch reads GHNGVQDYTR…TFIRVLPAQQ (71 aa). Residues 40-73 adopt a coiled-coil conformation; it reads LQTNEKLIKRNKVLTADIEDLKLGHEGIEERARN.

It belongs to the FtsB family. In terms of assembly, part of a complex composed of FtsB, FtsL and FtsQ.

It localises to the cell inner membrane. Its function is as follows. Essential cell division protein. May link together the upstream cell division proteins, which are predominantly cytoplasmic, with the downstream cell division proteins, which are predominantly periplasmic. This Pseudoalteromonas translucida (strain TAC 125) protein is Cell division protein FtsB.